A 189-amino-acid polypeptide reads, in one-letter code: Calcium and integrin-binding family member 2 (189 aa).

3 EF-hand domains span residues 68–103 (RENP…FSEQ), 105–140 (PRDI…MTKN), and 146–181 (EHQQ…APDF). The Ca(2+) site is built by Asp-118, Asp-120, Asp-122, Asp-129, Asp-159, Asp-161, Asp-163, Lys-165, and Glu-170.

As to quaternary structure, monomer. Homodimer.

The protein localises to the cytoplasm. Functionally, calcium- and integrin-binding protein. Plays a role in intracellular calcium homeostasis. Critical for proper photoreceptor cell maintenance and function. Required for prevention of light-dependent retinal degeneration. The chain is Calcium and integrin-binding family member 2 from Drosophila melanogaster (Fruit fly).